The following is a 381-amino-acid chain: MTETQSLELAKELISRPSVTPDDRDCQKLLAERLHKIGFAAEELHFGDTKNIWLRRGTKAPVVCFAGHTDVVPTGPVEKWDSPPFEPAERDGRLYGRGAADMKTSIACFVTACERFVAEHPDHQGSIALLITSDEEGDALDGTTKVVDVLKARDELIDYCIVGEPTAVDKLGDMIKNGRRGSLSGNLTVKGKQGHIAYPHLAINPVHTFAPALLELTQEVWDEGNEYFPPTSFQISNINGGTGATNVIPGELNVKFNFRFSTESTEAGLKQRVHAILDKHGVQYDLQWSCSGQPFLTQAGKLTDVARAAIAETCGIEAELSTTGGTSDGRFIKAIAKELIELGPSNATIHQINENVRLDDIPKLSAVYEGILARLLAGNAV.

A Zn(2+)-binding site is contributed by His-68. Asp-70 is an active-site residue. Asp-101 is a Zn(2+) binding site. The Proton acceptor role is filled by Glu-135. Zn(2+) contacts are provided by Glu-136, Glu-164, and His-350.

The protein belongs to the peptidase M20A family. DapE subfamily. In terms of assembly, homodimer. Requires Zn(2+) as cofactor. It depends on Co(2+) as a cofactor.

It catalyses the reaction N-succinyl-(2S,6S)-2,6-diaminopimelate + H2O = (2S,6S)-2,6-diaminopimelate + succinate. Its pathway is amino-acid biosynthesis; L-lysine biosynthesis via DAP pathway; LL-2,6-diaminopimelate from (S)-tetrahydrodipicolinate (succinylase route): step 3/3. Functionally, catalyzes the hydrolysis of N-succinyl-L,L-diaminopimelic acid (SDAP), forming succinate and LL-2,6-diaminopimelate (DAP), an intermediate involved in the bacterial biosynthesis of lysine and meso-diaminopimelic acid, an essential component of bacterial cell walls. The sequence is that of Succinyl-diaminopimelate desuccinylase from Neisseria meningitidis serogroup C / serotype 2a (strain ATCC 700532 / DSM 15464 / FAM18).